Consider the following 309-residue polypeptide: MAQEADGIRLDQRHGKARVRVGRVWRHAHDGSHHFVEWNVSISLLSHCLSSYRLDDNSDIVATDTIKNTVYVKAKECGDRLSVEEFAILIGKHFCSFYPQVFTAIVNIIEKPWERVSIDGKPHLHGFKLGSENHTTEARVEKSGALNLTSGIGGLALLKTTQSGFERFVRDKYTILPETRERMLATEVNASWRYSYESVASIPTKGLYFSEKFMDVKKVLMDTFFGPPETGVYSPSVQRTLYLMGSAVLKRFADVSSIHLKMPNIHFLPVNLSTKENPSMVKFKDDVYLPTDEPHGSIEATLSRITSKL.

A2 carries the N-acetylalanine modification. Active-site charge relay system residues include K16 and T63. Positions 63, 64, 165, 182, 237, 238, and 264 each coordinate urate. Catalysis depends on H266, which acts as the Charge relay system. The Microbody targeting signal signature appears at 307–309 (SKL).

The protein belongs to the uricase family.

It localises to the peroxisome. It carries out the reaction urate + O2 + H2O = 5-hydroxyisourate + H2O2. It functions in the pathway purine metabolism; urate degradation; (S)-allantoin from urate: step 1/3. Its function is as follows. Catalyzes the oxidation of uric acid to 5-hydroxyisourate, which is further processed to form (S)-allantoin. This Arabidopsis thaliana (Mouse-ear cress) protein is Uricase.